A 361-amino-acid polypeptide reads, in one-letter code: MRHVQEARAVPAEHEARPAPVTMPANGSPYRLGAALLQSLAQEMNALAEQASALLSMPPESLSLDADAFAQIARRNVPRWHFAMLNDTERNTALMTALERGIPAGATVLDIGSGSGLLAMAAARAGAGRVFTCEMNPLLAEIARNVISAHGMSDVITVIGKPSTALDPVRDLGGPVDVLVSEIVDCGLIGEGLLPSVRHAREHLLKPDGIMLPSAARLHGRLVSSDEVLKLNQVTTAGGFDVSLMNTVATRGHFPVRLDTWPHRFLSEAAPLVEFDLARSALEPGERPLALTATADGEVQALAVWFELDMGSGITLSNPPDNPRSHWMQGWVPLDKPVPVKAGETLALRLGWSDFTLRVSI.

Residues 1 to 17 (MRHVQEARAVPAEHEAR) are compositionally biased toward basic and acidic residues. The disordered stretch occupies residues 1-24 (MRHVQEARAVPAEHEARPAPVTMP). The SAM-dependent MTase PRMT-type domain maps to 65 to 361 (DADAFAQIAR…WSDFTLRVSI (297 aa)).

The protein belongs to the class I-like SAM-binding methyltransferase superfamily. Protein arginine N-methyltransferase family.

It catalyses the reaction L-arginine + S-adenosyl-L-methionine = N(omega)-methyl-L-arginine + S-adenosyl-L-homocysteine + H(+). It functions in the pathway antibiotic biosynthesis. Involved in the biosynthesis of the glucosamine-nitrosourea antibiotic streptozotocin (SZN). Catalyzes the conversion of L-arginine to N(omega)-methyl-L-arginine (L-NMA), using S-adenosyl-L-methionine (SAM) as a methyl donor. This chain is Arginine N(omega)-methyltransferase, found in Streptomyces achromogenes subsp. streptozoticus.